Here is a 71-residue protein sequence, read N- to C-terminus: Small ribosomal subunit protein bS21 (71 aa).

Belongs to the bacterial ribosomal protein bS21 family.

This Buchnera aphidicola subsp. Cinara cedri (strain Cc) protein is Small ribosomal subunit protein bS21.